We begin with the raw amino-acid sequence, 390 residues long: Nuclear receptor subfamily 2 group F member 6 (390 aa).

Residues 1-15 (MAMVTGGWGDPGGDT) show a composition bias toward gly residues. The disordered stretch occupies residues 1–50 (MAMVTGGWGDPGGDTNGVDKAGGSYPRATEDDSASPPGATSDAEPGDEER). 2 positions are modified to phosphoserine: S35 and S41. The nuclear receptor DNA-binding region spans 54–129 (QVDCVVCGDK…VGMRKEAVQR (76 aa)). An NR C4-type zinc finger spans residues 57-77 (CVVCGDKSSGKHYGVFTCEGC). At S84 the chain carries Phosphoserine. The segment at 93–117 (CRSNRDCQIDQHHRNQCQYCRLKKC) adopts an NR C4-type zinc-finger fold. An NR LBD domain is found at 157-380 (PVSELIAQLL…TLIRDMLLSG (224 aa)). The important for dimerization stretch occupies residues 314 to 390 (LQEKAQVALT…STFNWPYGSG (77 aa)).

It belongs to the nuclear hormone receptor family. NR2 subfamily. Binds DNA as dimer; homodimer and heterodimer with NR2F2 and probably NR2F1. Interacts with THRB.

Its subcellular location is the nucleus. Its function is as follows. Transcription factor predominantly involved in transcriptional repression. Binds to promoter/enhancer response elements that contain the imperfect 5'-AGGTCA-3' direct or inverted repeats with various spacings which are also recognized by other nuclear hormone receptors. Involved in modulation of hormonal responses. Represses transcriptional activity of the lutropin-choriogonadotropic hormone receptor/LHCGR gene, the renin/REN gene and the oxytocin-neurophysin/OXT gene. Represses the triiodothyronine-dependent and -independent transcriptional activity of the thyroid hormone receptor gene in a cell type-specific manner. The corepressing function towards thyroid hormone receptor beta/THRB involves at least in part the inhibition of THRB binding to triiodothyronine response elements (TREs) by NR2F6. Inhibits NFATC transcription factor DNA binding and subsequently its transcriptional activity. Acts as transcriptional repressor of IL-17 expression in Th-17 differentiated CD4(+) T cells and may be involved in induction and/or maintenance of peripheral immunological tolerance and autoimmunity. Involved in development of forebrain circadian clock; is required early in the development of the locus coeruleus (LC). This Mus musculus (Mouse) protein is Nuclear receptor subfamily 2 group F member 6 (Nr2f6).